The following is a 425-amino-acid chain: Serine hydroxymethyltransferase (425 aa).

(6S)-5,6,7,8-tetrahydrofolate-binding positions include Leu128 and 132–134; that span reads GHL. At Lys237 the chain carries N6-(pyridoxal phosphate)lysine.

Belongs to the SHMT family. As to quaternary structure, homodimer. Pyridoxal 5'-phosphate is required as a cofactor.

It is found in the cytoplasm. It carries out the reaction (6R)-5,10-methylene-5,6,7,8-tetrahydrofolate + glycine + H2O = (6S)-5,6,7,8-tetrahydrofolate + L-serine. It participates in one-carbon metabolism; tetrahydrofolate interconversion. The protein operates within amino-acid biosynthesis; glycine biosynthesis; glycine from L-serine: step 1/1. In terms of biological role, catalyzes the reversible interconversion of serine and glycine with tetrahydrofolate (THF) serving as the one-carbon carrier. This reaction serves as the major source of one-carbon groups required for the biosynthesis of purines, thymidylate, methionine, and other important biomolecules. Also exhibits THF-independent aldolase activity toward beta-hydroxyamino acids, producing glycine and aldehydes, via a retro-aldol mechanism. This chain is Serine hydroxymethyltransferase, found in Wolbachia pipientis wMel.